A 153-amino-acid polypeptide reads, in one-letter code: Deoxyuridine 5'-triphosphate nucleotidohydrolase (153 aa).

Residues 71 to 73, asparagine 84, 88 to 90, and lysine 98 each bind substrate; these read RSG and TID.

Belongs to the dUTPase family. Mg(2+) is required as a cofactor.

The enzyme catalyses dUTP + H2O = dUMP + diphosphate + H(+). It functions in the pathway pyrimidine metabolism; dUMP biosynthesis; dUMP from dCTP (dUTP route): step 2/2. In terms of biological role, this enzyme is involved in nucleotide metabolism: it produces dUMP, the immediate precursor of thymidine nucleotides and it decreases the intracellular concentration of dUTP so that uracil cannot be incorporated into DNA. The polypeptide is Deoxyuridine 5'-triphosphate nucleotidohydrolase (Ehrlichia canis (strain Jake)).